The sequence spans 284 residues: Diaminopimelate epimerase (284 aa).

Residues Asn13 and Asn70 each contribute to the substrate site. The active-site Proton donor is Cys79. Residues 80–81, Asn167, Asn200, and 218–219 each bind substrate; these read GN and ER. The active-site Proton acceptor is the Cys227. A substrate-binding site is contributed by 228-229; that stretch reads GT.

It belongs to the diaminopimelate epimerase family. As to quaternary structure, homodimer.

Its subcellular location is the cytoplasm. The enzyme catalyses (2S,6S)-2,6-diaminopimelate = meso-2,6-diaminopimelate. Its pathway is amino-acid biosynthesis; L-lysine biosynthesis via DAP pathway; DL-2,6-diaminopimelate from LL-2,6-diaminopimelate: step 1/1. Its function is as follows. Catalyzes the stereoinversion of LL-2,6-diaminopimelate (L,L-DAP) to meso-diaminopimelate (meso-DAP), a precursor of L-lysine and an essential component of the bacterial peptidoglycan. In Prochlorococcus marinus (strain NATL1A), this protein is Diaminopimelate epimerase.